The sequence spans 288 residues: Protein-S-isoprenylcysteine O-methyltransferase (288 aa).

Residues Ser-13–Leu-29 form a helical membrane-spanning segment. At Thr-30–Arg-45 the chain is on the lumenal side. The helical transmembrane segment at Ile-46–Tyr-63 threads the bilayer. At Lys-64 to Arg-73 the chain is on the cytoplasmic side. Residues Ala-74–Gln-91 traverse the membrane as a helical segment. Topologically, residues Ser-92–Pro-96 are lumenal. The chain crosses the membrane as a helical span at residues Phe-97–Ala-116. Topologically, residues Met-117–Glu-135 are cytoplasmic. Residues Tyr-136–Ile-153 form a helical membrane-spanning segment. The Lumenal segment spans residues Tyr-154–Lys-158. Residues Gln-159–Arg-178 traverse the membrane as a helical segment. Residues Lys-179–Ser-216 lie on the Cytoplasmic side of the membrane. S-adenosyl-L-methionine is bound by residues Gln-194, His-201–Val-204, Tyr-209, and His-214–Tyr-217. A helical membrane pass occupies residues Tyr-217–Cys-232. A topological domain (lumenal) is located at residue Asn-233. Residues Pro-234–Phe-248 traverse the membrane as a helical segment. Residues Ser-249 to Pro-288 lie on the Cytoplasmic side of the membrane. Substrate is bound at residue Arg-251. Glu-255 is a binding site for S-adenosyl-L-methionine.

It belongs to the class VI-like SAM-binding methyltransferase superfamily. Isoprenylcysteine carboxyl methyltransferase family.

It is found in the endoplasmic reticulum membrane. The catalysed reaction is [protein]-C-terminal S-[(2E,6E)-farnesyl]-L-cysteine + S-adenosyl-L-methionine = [protein]-C-terminal S-[(2E,6E)-farnesyl]-L-cysteine methyl ester + S-adenosyl-L-homocysteine. Catalyzes the post-translational methylation of isoprenylated C-terminal cysteine residues. This is Protein-S-isoprenylcysteine O-methyltransferase (icmt) from Xenopus laevis (African clawed frog).